Consider the following 395-residue polypeptide: Synaptotagmin-8 (395 aa).

The Extracellular portion of the chain corresponds to 1 to 44 (MQADRSMKMGHALNPFSTSAPLDATAGPSLIPDLITRIPWPRWT). Residues 45–65 (LFIAILAAGVLLVSCLLCVIC) traverse the membrane as a helical; Signal-anchor for type III membrane protein segment. Topologically, residues 66-395 (CYCHRHRHRK…PRLPLLRPRS (330 aa)) are cytoplasmic. C2 domains follow at residues 113–229 (QWGR…ESWY) and 241–370 (QMGE…AQWH).

The protein belongs to the synaptotagmin family. In terms of assembly, homodimer or homooligomer. Homodimerization and homooligomerization do not depend on Ca(2+). Interacts with SYNCRIP isoform 2 C-terminus. Binds inositol 1,3,4,5-tetrakisphosphate (IP4). Binds to AP2 in a Ca(2+)-independent manner. Interacts with STX1A, STX1B and STX2; the interaction is Ca(2+)-dependent. As to expression, ubiquitous. Detected in testis and brain. Expressed in primary neurons, neuroendocrine and endocrine cells.

It is found in the cytoplasm. It localises to the cell membrane. Its subcellular location is the cytoplasmic vesicle. The protein localises to the secretory vesicle. The protein resides in the acrosome. Functionally, involved in the trafficking and exocytosis of secretory vesicles in non-neuronal tissues. Mediates Ca(2+)-regulation of exocytosis acrosomal reaction in sperm. May mediate Ca(2+)-regulation of exocytosis in insulin secreted cells. In Mus musculus (Mouse), this protein is Synaptotagmin-8 (Syt8).